A 380-amino-acid chain; its full sequence is 4-hydroxy-3-methylbut-2-en-1-yl diphosphate synthase (flavodoxin) (380 aa).

C279, C282, C314, and E321 together coordinate [4Fe-4S] cluster.

The protein belongs to the IspG family. Requires [4Fe-4S] cluster as cofactor.

It carries out the reaction (2E)-4-hydroxy-3-methylbut-2-enyl diphosphate + oxidized [flavodoxin] + H2O + 2 H(+) = 2-C-methyl-D-erythritol 2,4-cyclic diphosphate + reduced [flavodoxin]. Its pathway is isoprenoid biosynthesis; isopentenyl diphosphate biosynthesis via DXP pathway; isopentenyl diphosphate from 1-deoxy-D-xylulose 5-phosphate: step 5/6. In terms of biological role, converts 2C-methyl-D-erythritol 2,4-cyclodiphosphate (ME-2,4cPP) into 1-hydroxy-2-methyl-2-(E)-butenyl 4-diphosphate. This chain is 4-hydroxy-3-methylbut-2-en-1-yl diphosphate synthase (flavodoxin), found in Tropheryma whipplei (strain TW08/27) (Whipple's bacillus).